The following is a 113-amino-acid chain: Bactofilin BacN (113 aa).

The protein belongs to the bactofilin family. Interacts with BacO and BacP, the 3 proteins colocalize as an extended structure.

It is found in the cytoplasm. Its subcellular location is the cytoskeleton. A non-essential component of the chromosome segregation machinery. Positions the ParA-ParB-parS chromosome segregation machinery within the cell; BacP seems to be the most important bactofilin in this process. Forms a heteropolymeric, subpolar scaffold in the cell; BacP probably forms the core, BacO contributes to position and integrity while BacN does not seem to contribute to assembly. The protein is Bactofilin BacN of Myxococcus xanthus (strain DK1622).